The primary structure comprises 475 residues: Ribulose bisphosphate carboxylase large chain (475 aa).

The propeptide occupies 1 to 2 (MS). N-acetylproline is present on P3. Position 14 is an N6,N6,N6-trimethyllysine (K14). Substrate is bound by residues N123 and T173. Residue K175 is the Proton acceptor of the active site. K177 lines the substrate pocket. 3 residues coordinate Mg(2+): K201, D203, and E204. At K201 the chain carries N6-carboxylysine. H294 (proton acceptor) is an active-site residue. R295, H327, and S379 together coordinate substrate.

This sequence belongs to the RuBisCO large chain family. Type I subfamily. Heterohexadecamer of 8 large chains and 8 small chains; disulfide-linked. The disulfide link is formed within the large subunit homodimers. Mg(2+) is required as a cofactor. Post-translationally, the disulfide bond which can form in the large chain dimeric partners within the hexadecamer appears to be associated with oxidative stress and protein turnover.

The protein resides in the plastid. It localises to the chloroplast. It catalyses the reaction 2 (2R)-3-phosphoglycerate + 2 H(+) = D-ribulose 1,5-bisphosphate + CO2 + H2O. The catalysed reaction is D-ribulose 1,5-bisphosphate + O2 = 2-phosphoglycolate + (2R)-3-phosphoglycerate + 2 H(+). Its function is as follows. RuBisCO catalyzes two reactions: the carboxylation of D-ribulose 1,5-bisphosphate, the primary event in carbon dioxide fixation, as well as the oxidative fragmentation of the pentose substrate in the photorespiration process. Both reactions occur simultaneously and in competition at the same active site. This chain is Ribulose bisphosphate carboxylase large chain, found in Adiantum capillus-veneris (Maidenhair fern).